The sequence spans 171 residues: Crossover junction endodeoxyribonuclease RuvC (171 aa).

Catalysis depends on residues aspartate 11, glutamate 71, and aspartate 143. Aspartate 11, glutamate 71, and aspartate 143 together coordinate Mg(2+).

This sequence belongs to the RuvC family. Homodimer which binds Holliday junction (HJ) DNA. The HJ becomes 2-fold symmetrical on binding to RuvC with unstacked arms; it has a different conformation from HJ DNA in complex with RuvA. In the full resolvosome a probable DNA-RuvA(4)-RuvB(12)-RuvC(2) complex forms which resolves the HJ. Requires Mg(2+) as cofactor.

The protein resides in the cytoplasm. The catalysed reaction is Endonucleolytic cleavage at a junction such as a reciprocal single-stranded crossover between two homologous DNA duplexes (Holliday junction).. In terms of biological role, the RuvA-RuvB-RuvC complex processes Holliday junction (HJ) DNA during genetic recombination and DNA repair. Endonuclease that resolves HJ intermediates. Cleaves cruciform DNA by making single-stranded nicks across the HJ at symmetrical positions within the homologous arms, yielding a 5'-phosphate and a 3'-hydroxyl group; requires a central core of homology in the junction. The consensus cleavage sequence is 5'-(A/T)TT(C/G)-3'. Cleavage occurs on the 3'-side of the TT dinucleotide at the point of strand exchange. HJ branch migration catalyzed by RuvA-RuvB allows RuvC to scan DNA until it finds its consensus sequence, where it cleaves and resolves the cruciform DNA. The sequence is that of Crossover junction endodeoxyribonuclease RuvC from Bartonella tribocorum (strain CIP 105476 / IBS 506).